A 378-amino-acid polypeptide reads, in one-letter code: Carbamoyl phosphate synthase small chain (378 aa).

Residues Met-1 to Asn-188 are CPSase. L-glutamine-binding residues include Ser-49, Gly-244, and Gly-246. A Glutamine amidotransferase type-1 domain is found at Lys-192–Lys-378. Cys-272 acts as the Nucleophile in catalysis. The L-glutamine site is built by Leu-273, Gln-276, Asn-314, and Tyr-317. Catalysis depends on residues His-355 and Glu-357.

Belongs to the CarA family. As to quaternary structure, composed of two chains; the small (or glutamine) chain promotes the hydrolysis of glutamine to ammonia, which is used by the large (or ammonia) chain to synthesize carbamoyl phosphate. Tetramer of heterodimers (alpha,beta)4.

The catalysed reaction is hydrogencarbonate + L-glutamine + 2 ATP + H2O = carbamoyl phosphate + L-glutamate + 2 ADP + phosphate + 2 H(+). It catalyses the reaction L-glutamine + H2O = L-glutamate + NH4(+). It participates in amino-acid biosynthesis; L-arginine biosynthesis; carbamoyl phosphate from bicarbonate: step 1/1. Its pathway is pyrimidine metabolism; UMP biosynthesis via de novo pathway; (S)-dihydroorotate from bicarbonate: step 1/3. In terms of biological role, small subunit of the glutamine-dependent carbamoyl phosphate synthetase (CPSase). CPSase catalyzes the formation of carbamoyl phosphate from the ammonia moiety of glutamine, carbonate, and phosphate donated by ATP, constituting the first step of 2 biosynthetic pathways, one leading to arginine and/or urea and the other to pyrimidine nucleotides. The small subunit (glutamine amidotransferase) binds and cleaves glutamine to supply the large subunit with the substrate ammonia. The protein is Carbamoyl phosphate synthase small chain of Helicobacter hepaticus (strain ATCC 51449 / 3B1).